The following is a 2278-amino-acid chain: Protein Ycf2 (2278 aa).

Position 1632–1639 (Gly-1632–Ser-1639) interacts with ATP.

Belongs to the Ycf2 family.

The protein localises to the plastid. It localises to the chloroplast stroma. Probable ATPase of unknown function. Its presence in a non-photosynthetic plant (Epifagus virginiana) and experiments in tobacco indicate that it has an essential function which is probably not related to photosynthesis. This chain is Protein Ycf2, found in Solanum tuberosum (Potato).